The following is a 436-amino-acid chain: Trigger factor (436 aa).

The region spanning 161-246 is the PPIase FKBP-type domain; sequence EDQLNIDFVG…VNSVSEPKLP (86 aa).

Belongs to the FKBP-type PPIase family. Tig subfamily.

The protein resides in the cytoplasm. The catalysed reaction is [protein]-peptidylproline (omega=180) = [protein]-peptidylproline (omega=0). In terms of biological role, involved in protein export. Acts as a chaperone by maintaining the newly synthesized protein in an open conformation. Functions as a peptidyl-prolyl cis-trans isomerase. The polypeptide is Trigger factor (Pseudomonas fluorescens (strain SBW25)).